The sequence spans 303 residues: Cilia- and flagella-associated protein 161 (303 aa).

Microtubule inner protein component of sperm flagellar doublet microtubules.

It is found in the cytoplasm. The protein resides in the cytoskeleton. It localises to the cilium axoneme. The protein localises to the flagellum axoneme. In terms of biological role, microtubule inner protein (MIP) part of the dynein-decorated doublet microtubules (DMTs) in cilia axoneme, which is required for motile cilia beating. The sequence is that of Cilia- and flagella-associated protein 161 from Mus musculus (Mouse).